We begin with the raw amino-acid sequence, 160 residues long: Keratin-associated protein 9-6 (160 aa).

16 tandem repeats follow at residues 4 to 8 (CCSPG), 13 to 17 (CCRTT), 18 to 22 (CCRTT), 37 to 41 (CCQPS), 42 to 46 (CCVSS), 47 to 51 (CCQPY), 56 to 60 (CCQNT), 61 to 65 (CCRTT), 66 to 70 (CCQPT), 75 to 79 (CCQPS), 80 to 84 (CCSTP), 90 to 94 (CCGSS), 95 to 99 (CCGQT), 140 to 144 (CCQPC), 149 to 153 (CCVSS), and 154 to 158 (CCQHS). The segment at 4-158 (CCSPGCQPTC…CCVSSCCQHS (155 aa)) is 16 X 5 AA repeats of C-C-[GSVRQ]-[QTSPHN]-[TPSGYC].

Belongs to the KRTAP type 9 family. As to quaternary structure, interacts with hair keratins.

Its function is as follows. In the hair cortex, hair keratin intermediate filaments are embedded in an interfilamentous matrix, consisting of hair keratin-associated proteins (KRTAP), which are essential for the formation of a rigid and resistant hair shaft through their extensive disulfide bond cross-linking with abundant cysteine residues of hair keratins. The matrix proteins include the high-sulfur and high-glycine-tyrosine keratins. The chain is Keratin-associated protein 9-6 from Homo sapiens (Human).